The primary structure comprises 279 residues: Undecaprenyl-diphosphatase (279 aa).

The next 8 helical transmembrane spans lie at 2–22 (LIIELLKAIFFGIIEGITEWL), 44–64 (AFIEMFNIVIQLGAIIAVMLI), 85–105 (WQLWLKVVIACIPSILIAVPL), 113–133 (FYFMVPIAIALIVYGIAFIWI), 163–183 (VLSIVPGTSRSGATILGAIIL), 188–208 (TVAADFTFFLAIPTMFGYSGL), 223–243 (AQVLILLVASLTAFVVSLLAI), and 255–275 (FTIFGKYRIVLGSLLLIYSFF).

Belongs to the UppP family.

The protein resides in the cell membrane. It carries out the reaction di-trans,octa-cis-undecaprenyl diphosphate + H2O = di-trans,octa-cis-undecaprenyl phosphate + phosphate + H(+). Its function is as follows. Catalyzes the dephosphorylation of undecaprenyl diphosphate (UPP). Confers resistance to bacitracin. This Streptococcus pyogenes serotype M5 (strain Manfredo) protein is Undecaprenyl-diphosphatase.